A 555-amino-acid polypeptide reads, in one-letter code: Urocanate hydratase (555 aa).

Residues 52–53 (GG), glutamine 130, 176–178 (GMG), glutamate 196, arginine 201, 242–243 (NA), 263–267 (QTSAH), 272–273 (YL), and tyrosine 321 contribute to the NAD(+) site. Residue cysteine 409 is part of the active site. Glycine 491 contacts NAD(+).

The protein belongs to the urocanase family. The cofactor is NAD(+).

Its subcellular location is the cytoplasm. The enzyme catalyses 4-imidazolone-5-propanoate = trans-urocanate + H2O. It functions in the pathway amino-acid degradation; L-histidine degradation into L-glutamate; N-formimidoyl-L-glutamate from L-histidine: step 2/3. Its function is as follows. Catalyzes the conversion of urocanate to 4-imidazolone-5-propionate. In Nocardioides sp. (strain ATCC BAA-499 / JS614), this protein is Urocanate hydratase.